The following is a 585-amino-acid chain: MASVVVKTIWQSKEIHEAGDPPAGVESRAQLVPEAPGGVTSPAKGITKKKKAVSFHGVEPRMSHEPMHWCLNLKRSSACTNVSLLNLAAMEPDSSGTDSTTEDSGPLALPGPPASPTTPWAPEDPDITELLSGVNSGLVRAKDSITSLKEKTTRVNQHVQTLQSECSVLSENLERRRQEAEELEGYCSQLKGPRPDVLTQENCRKVTRSVEDAEIKTNVLKQNSALLEEKLRYLQQQLQDETPRRQEAELQELEQKLEAGLSRHGLGPTTPIQGCSGPPGSPEEPPRPRGLPSNGWGMAIRAGEGPSLSEQELQKVSSGLEELRREVSSLAARWHQEEGAVQEALRLLGGLGGRLDGFLGQWERAQREQAQSARGLQELRGRADELCTMVERSAVSVASLRSELEALGPVKPILEELGRQLQNSRRGPDHVLNLDRPAQGPCPRCASQGQQLSTESLQQLLERALTPLVDEVKQKGLAPACPSCQRLHKKILELERQALAKHVRAEALSSTLRLAQDEAVRAKNLLLTDKMKPEEKVATLDYMHLKMCSLHDQLSHLPLEGSTGAMGGGSTGGAPPKRGGPGSEQ.

The segment covering 91–108 (EPDSSGTDSTTEDSGPLA) has biased composition (low complexity). Residues 91 to 126 (EPDSSGTDSTTEDSGPLALPGPPASPTTPWAPEDPD) are disordered. Residues serine 224, serine 281, and serine 309 each carry the phosphoserine modification. 2 disordered regions span residues 262–309 (SRHG…PSLS) and 559–585 (LEGS…GSEQ).

Post-translationally, phosphorylated on serine residue(s) by STK22A/TSSK1 and STK22B/TSSK2.

The protein resides in the cytoplasm. It localises to the cytoskeleton. Its subcellular location is the microtubule organizing center. The protein localises to the centrosome. It is found in the centriole. May play a role in testicular physiology, most probably in the process of spermatogenesis or spermatid development. This Rattus norvegicus (Rat) protein is Testis-specific serine kinase substrate (Tsks).